The following is a 350-amino-acid chain: [LysW]-L-2-aminoadipate/[LysW]-L-glutamate phosphate reductase (350 aa).

10-13 serves as a coordination point for NADP(+); sequence SGYT. Cys150 is an active-site residue. Asn317 provides a ligand contact to NADP(+).

It belongs to the NAGSA dehydrogenase family. Type 1 subfamily. LysY sub-subfamily.

Its subcellular location is the cytoplasm. It catalyses the reaction [amino-group carrier protein]-C-terminal-N-(1-carboxy-5-oxopentan-1-yl)-L-glutamine + phosphate + NADP(+) = [amino-group carrier protein]-C-terminal-N-(1-carboxy-5-phosphooxy-5-oxopentan-1-yl)-L-glutamine + NADPH + H(+). The enzyme catalyses [amino-group carrier protein]-C-terminal-gamma-(L-glutamyl-5-semialdehyde)-L-glutamate + phosphate + NADP(+) = [amino-group carrier protein]-C-terminal-gamma-(5-phospho-L-glutamyl)-L-glutamate + NADPH + H(+). It participates in amino-acid biosynthesis; L-lysine biosynthesis via AAA pathway; L-lysine from L-alpha-aminoadipate (Thermus route): step 3/5. The protein operates within amino-acid biosynthesis; L-arginine biosynthesis. In terms of biological role, involved in both the arginine and lysine biosynthetic pathways. The polypeptide is [LysW]-L-2-aminoadipate/[LysW]-L-glutamate phosphate reductase (Sulfolobus acidocaldarius (strain ATCC 33909 / DSM 639 / JCM 8929 / NBRC 15157 / NCIMB 11770)).